A 135-amino-acid polypeptide reads, in one-letter code: Ribosome-binding factor A (135 aa).

The protein belongs to the RbfA family. In terms of assembly, monomer. Binds 30S ribosomal subunits, but not 50S ribosomal subunits or 70S ribosomes.

The protein localises to the cytoplasm. Its function is as follows. One of several proteins that assist in the late maturation steps of the functional core of the 30S ribosomal subunit. Associates with free 30S ribosomal subunits (but not with 30S subunits that are part of 70S ribosomes or polysomes). Required for efficient processing of 16S rRNA. May interact with the 5'-terminal helix region of 16S rRNA. This chain is Ribosome-binding factor A, found in Rhodopseudomonas palustris (strain HaA2).